The following is a 185-amino-acid chain: MARKNQKAPWEPEEEYILVSKSEMKRDMDALQKLGEELVELKPSVLAKFPISEELLDAIKDAQRFKNEARRRQLQYIGKVMRQEDPEPIQAALDKIRNKHSQNTAVLHKLETLRERIVEQGDSAIDDVVALYPDADRQRLRQLARMATKEKQANKPPKAYREIFQILKQLNDDAVSDSIENELKQ.

This sequence belongs to the DarP family.

It is found in the cytoplasm. Functionally, member of a network of 50S ribosomal subunit biogenesis factors which assembles along the 30S-50S interface, preventing incorrect 23S rRNA structures from forming. Promotes peptidyl transferase center (PTC) maturation. The protein is Dual-action ribosomal maturation protein DarP of Vibrio vulnificus (strain YJ016).